The primary structure comprises 378 residues: Carbamoyl phosphate synthase small chain (378 aa).

Residues Met-1–Asn-188 are CPSase. L-glutamine contacts are provided by Ser-49, Gly-244, and Gly-246. Residues Lys-192–Lys-378 enclose the Glutamine amidotransferase type-1 domain. Cys-272 (nucleophile) is an active-site residue. L-glutamine-binding residues include Leu-273, Gln-276, Asn-314, and Tyr-317. Catalysis depends on residues His-355 and Glu-357.

The protein belongs to the CarA family. Composed of two chains; the small (or glutamine) chain promotes the hydrolysis of glutamine to ammonia, which is used by the large (or ammonia) chain to synthesize carbamoyl phosphate. Tetramer of heterodimers (alpha,beta)4.

It catalyses the reaction hydrogencarbonate + L-glutamine + 2 ATP + H2O = carbamoyl phosphate + L-glutamate + 2 ADP + phosphate + 2 H(+). It carries out the reaction L-glutamine + H2O = L-glutamate + NH4(+). It participates in amino-acid biosynthesis; L-arginine biosynthesis; carbamoyl phosphate from bicarbonate: step 1/1. The protein operates within pyrimidine metabolism; UMP biosynthesis via de novo pathway; (S)-dihydroorotate from bicarbonate: step 1/3. Small subunit of the glutamine-dependent carbamoyl phosphate synthetase (CPSase). CPSase catalyzes the formation of carbamoyl phosphate from the ammonia moiety of glutamine, carbonate, and phosphate donated by ATP, constituting the first step of 2 biosynthetic pathways, one leading to arginine and/or urea and the other to pyrimidine nucleotides. The small subunit (glutamine amidotransferase) binds and cleaves glutamine to supply the large subunit with the substrate ammonia. The protein is Carbamoyl phosphate synthase small chain of Helicobacter hepaticus (strain ATCC 51449 / 3B1).